The primary structure comprises 209 residues: Large ribosomal subunit protein bL25 (209 aa).

A disordered region spans residues 188–209; it reads STSMEKEGEGSQEPTAAPSSEN. Over residues 199 to 209 the composition is skewed to polar residues; it reads QEPTAAPSSEN.

This sequence belongs to the bacterial ribosomal protein bL25 family. CTC subfamily. In terms of assembly, part of the 50S ribosomal subunit; part of the 5S rRNA/L5/L18/L25 subcomplex. Contacts the 5S rRNA. Binds to the 5S rRNA independently of L5 and L18.

In terms of biological role, this is one of the proteins that binds to the 5S RNA in the ribosome where it forms part of the central protuberance. The sequence is that of Large ribosomal subunit protein bL25 from Ehrlichia canis (strain Jake).